A 151-amino-acid chain; its full sequence is Large ribosomal subunit protein bL9 (151 aa).

This sequence belongs to the bacterial ribosomal protein bL9 family.

Binds to the 23S rRNA. In Bordetella bronchiseptica (strain ATCC BAA-588 / NCTC 13252 / RB50) (Alcaligenes bronchisepticus), this protein is Large ribosomal subunit protein bL9.